Reading from the N-terminus, the 103-residue chain is Urease subunit gamma (103 aa).

This sequence belongs to the urease gamma subunit family. As to quaternary structure, heterotrimer of UreA (gamma), UreB (beta) and UreC (alpha) subunits. Three heterotrimers associate to form the active enzyme.

It localises to the cytoplasm. It catalyses the reaction urea + 2 H2O + H(+) = hydrogencarbonate + 2 NH4(+). It participates in nitrogen metabolism; urea degradation; CO(2) and NH(3) from urea (urease route): step 1/1. This is Urease subunit gamma from Paracoccus denitrificans (strain Pd 1222).